Here is a 442-residue protein sequence, read N- to C-terminus: 3-ketoacyl-CoA thiolase (442 aa).

Residue cysteine 105 is the Acyl-thioester intermediate of the active site. Active-site proton acceptor residues include histidine 398 and cysteine 428.

The protein belongs to the thiolase-like superfamily. Thiolase family. As to quaternary structure, heterotetramer of two alpha chains (FadJ) and two beta chains (FadI).

The protein resides in the cytoplasm. It carries out the reaction an acyl-CoA + acetyl-CoA = a 3-oxoacyl-CoA + CoA. It functions in the pathway lipid metabolism; fatty acid beta-oxidation. Its function is as follows. Catalyzes the final step of fatty acid oxidation in which acetyl-CoA is released and the CoA ester of a fatty acid two carbons shorter is formed. The chain is 3-ketoacyl-CoA thiolase from Aliivibrio fischeri (strain MJ11) (Vibrio fischeri).